Reading from the N-terminus, the 87-residue chain is Small ribosomal subunit protein bS20 (87 aa).

The segment at 1–26 is disordered; the sequence is MANIKSAKKRAVQSEKRRKHNASRRS.

The protein belongs to the bacterial ribosomal protein bS20 family.

In terms of biological role, binds directly to 16S ribosomal RNA. The sequence is that of Small ribosomal subunit protein bS20 from Yersinia enterocolitica serotype O:8 / biotype 1B (strain NCTC 13174 / 8081).